A 290-amino-acid chain; its full sequence is Acetyl-coenzyme A carboxylase carboxyl transferase subunit beta (290 aa).

In terms of domain architecture, CoA carboxyltransferase N-terminal spans Leu27–Ala290. Residues Cys31, Cys34, Cys50, and Cys53 each contribute to the Zn(2+) site. The C4-type zinc-finger motif lies at Cys31–Cys53.

Belongs to the AccD/PCCB family. Acetyl-CoA carboxylase is a heterohexamer composed of biotin carboxyl carrier protein (AccB), biotin carboxylase (AccC) and two subunits each of ACCase subunit alpha (AccA) and ACCase subunit beta (AccD). Zn(2+) is required as a cofactor.

The protein resides in the cytoplasm. It carries out the reaction N(6)-carboxybiotinyl-L-lysyl-[protein] + acetyl-CoA = N(6)-biotinyl-L-lysyl-[protein] + malonyl-CoA. It participates in lipid metabolism; malonyl-CoA biosynthesis; malonyl-CoA from acetyl-CoA: step 1/1. Its function is as follows. Component of the acetyl coenzyme A carboxylase (ACC) complex. Biotin carboxylase (BC) catalyzes the carboxylation of biotin on its carrier protein (BCCP) and then the CO(2) group is transferred by the transcarboxylase to acetyl-CoA to form malonyl-CoA. This Cupriavidus taiwanensis (strain DSM 17343 / BCRC 17206 / CCUG 44338 / CIP 107171 / LMG 19424 / R1) (Ralstonia taiwanensis (strain LMG 19424)) protein is Acetyl-coenzyme A carboxylase carboxyl transferase subunit beta.